Here is a 2912-residue protein sequence, read N- to C-terminus: Fibrillin-2 (2912 aa).

Positions 1–28 (MGRRRRLCLQLYFLWLGCVVLWAQGTAG) are cleaved as a signal peptide. Residues 27 to 52 (AGQPQPPPPKPPRPQPPPQQVRSATA) form a disordered region. Positions 29-77 (QPQPPPPKPPRPQPPPQQVRSATAGSEGGFLAPEYREEGAAVASRVRRR) are excised as a propeptide. A compositionally biased stretch (pro residues) spans 30–45 (PQPPPPKPPRPQPPPQ). EGF-like domains are found at residues 111-142 (IVPI…STCG), 145-176 (SIQQ…TYCG), and 176-208 (GQPV…PQCE). Disulfide bonds link cysteine 115/cysteine 124, cysteine 119/cysteine 130, cysteine 132/cysteine 141, cysteine 149/cysteine 159, cysteine 153/cysteine 164, cysteine 166/cysteine 175, cysteine 180/cysteine 190, cysteine 184/cysteine 196, and cysteine 198/cysteine 207. The interval 149-359 (CSVRCMNGGT…VTSTDGSRCI (211 aa)) is interaction with MFAP4. Positions 214 to 266 (GPCFTQVNNQMCQGQLTGIVCTKTLCCATIGRAWGHPCEMCPAQPQPCRRGFI) constitute a TB 1 domain. An EGF-like 4; calcium-binding domain is found at 276–317 (DVDECQAIPGICQGGNCINTVGSFECRCPAGHKQSETTQKCE). 6 cysteine pairs are disulfide-bonded: cysteine 280–cysteine 292, cysteine 287–cysteine 301, cysteine 303–cysteine 316, cysteine 322–cysteine 334, cysteine 329–cysteine 343, and cysteine 345–cysteine 358. Residue serine 298 is glycosylated (O-linked (Glc) serine). Residues 318–359 (DIDECSIIPGICETGECSNTVGSYFCVCPRGYVTSTDGSRCI) form the EGF-like 5; calcium-binding domain. A glycan (O-linked (Glc) serine) is linked at serine 340. One can recognise a TB 2 domain in the interval 364–417 (GMCFSGLVNGRCAQELPGRMTKMQCCCEPGRCWGIGTIPEACPVRGSEEYRRLC). Residue asparagine 492 is glycosylated (N-linked (GlcNAc...) asparagine). The EGF-like 6 domain occupies 494-534 (TIDICKHHANLCLNGRCIPTVSSYRCECNMGYKQDANGDCI). 15 cysteine pairs are disulfide-bonded: cysteine 498-cysteine 510, cysteine 505-cysteine 519, cysteine 521-cysteine 533, cysteine 539-cysteine 549, cysteine 544-cysteine 558, cysteine 560-cysteine 573, cysteine 579-cysteine 591, cysteine 586-cysteine 600, cysteine 602-cysteine 615, cysteine 621-cysteine 632, cysteine 627-cysteine 641, cysteine 643-cysteine 656, cysteine 662-cysteine 673, cysteine 668-cysteine 682, and cysteine 684-cysteine 697. Residue serine 516 is glycosylated (O-linked (Glc) serine). Positions 535–574 (DVDECTSNPCTNGDCVNTPGSYYCKCHAGFQRTPTKQACI) constitute an EGF-like 7; calcium-binding domain. An O-linked (Glc) serine glycan is attached at serine 555. The 42-residue stretch at 575-616 (DIDECIQNGVLCKNGRCVNTDGSFQCICNAGFELTTDGKNCV) folds into the EGF-like 8; calcium-binding domain. Serine 597 is a glycosylation site (O-linked (Glc) serine). Residues 617-657 (DHDECTTTNMCLNGMCINEDGSFKCICKPGFVLAPNGRYCT) enclose the EGF-like 9; calcium-binding domain. Serine 638 carries an O-linked (Glc) serine glycan. An EGF-like 10; calcium-binding domain is found at 658-698 (DVDECQTPGICMNGHCINSEGSFRCDCPPGLAVGMDGRVCV). An O-linked (Glc) serine glycan is attached at serine 679. The TB 3 domain maps to 704–756 (STCYGGIKKGVCVRPFPGAVTKSECCCANPDYGFGEPCQPCPAKNSAEFHGLC). Positions 768 to 809 (DINECALDPDICANGICENLRGSYRCNCNSGYEPDASGRNCI) constitute an EGF-like 11; calcium-binding domain. Disulfide bonds link cysteine 772–cysteine 784, cysteine 779–cysteine 793, cysteine 795–cysteine 808, cysteine 814–cysteine 826, cysteine 821–cysteine 835, cysteine 837–cysteine 850, cysteine 856–cysteine 866, cysteine 861–cysteine 875, and cysteine 877–cysteine 890. An EGF-like 12; calcium-binding domain is found at 810-851 (DIDECLVNRLLCDNGLCRNTPGSYSCTCPPGYVFRTETETCE). Serine 832 carries an O-linked (Glc) serine glycan. In terms of domain architecture, EGF-like 13; calcium-binding spans 852 to 891 (DINECESNPCVNGACRNNLGSFNCECSPGSKLSSTGLICI). Serine 872 carries an O-linked (Glc) serine glycan. Residues 896–947 (GTCWLNIQDSRCEVNINGATLKSECCATLGAAWGSPCERCELDTACPRGLAR) enclose the TB 4 domain. The EGF-like 14; calcium-binding domain maps to 955–996 (DVNECEVFPGVCPNGRCVNSKGSFHCECPEGLTLDGTGRVCL). 3 disulfides stabilise this stretch: cysteine 959–cysteine 971, cysteine 966–cysteine 980, and cysteine 982–cysteine 995. O-linked (Glc) serine glycosylation is present at serine 977. A TB 5 domain is found at 1001-1052 (EQCYLKWDEDECIHPVPGKFRMDACCCAVGAAWGTECEECPKPGTKEYETLC). The region spanning 1073-1114 (DINECKAFPGMCTYGKCRNTIGSFKCRCNSGFALDMEERNCT) is the EGF-like 15; calcium-binding domain. 36 disulfide bridges follow: cysteine 1077-cysteine 1089, cysteine 1084-cysteine 1098, cysteine 1100-cysteine 1113, cysteine 1119-cysteine 1131, cysteine 1126-cysteine 1140, cysteine 1142-cysteine 1156, cysteine 1162-cysteine 1174, cysteine 1169-cysteine 1183, cysteine 1185-cysteine 1198, cysteine 1204-cysteine 1216, cysteine 1211-cysteine 1225, cysteine 1227-cysteine 1240, cysteine 1246-cysteine 1257, cysteine 1253-cysteine 1266, cysteine 1268-cysteine 1281, cysteine 1287-cysteine 1299, cysteine 1294-cysteine 1308, cysteine 1310-cysteine 1323, cysteine 1329-cysteine 1341, cysteine 1336-cysteine 1350, cysteine 1352-cysteine 1365, cysteine 1371-cysteine 1384, cysteine 1378-cysteine 1393, cysteine 1395-cysteine 1406, cysteine 1412-cysteine 1425, cysteine 1419-cysteine 1434, cysteine 1436-cysteine 1447, cysteine 1453-cysteine 1465, cysteine 1460-cysteine 1474, cysteine 1476-cysteine 1489, cysteine 1495-cysteine 1506, cysteine 1501-cysteine 1515, cysteine 1517-cysteine 1530, cysteine 1536-cysteine 1547, cysteine 1542-cysteine 1556, and cysteine 1558-cysteine 1571. The O-linked (Glc) serine glycan is linked to serine 1095. An N-linked (GlcNAc...) asparagine glycan is attached at asparagine 1112. Positions 1115-1157 (DIDECRISPDLCGSGICVNTPGSFECECFEGYESGFMMMKNCM) constitute an EGF-like 16; calcium-binding domain. Residues 1158–1199 (DIDECERNPLLCRGGTCVNTEGSFQCDCPLGHELSPSREDCV) form the EGF-like 17; calcium-binding domain. Residue serine 1180 is glycosylated (O-linked (Glc) serine). An EGF-like 18; calcium-binding domain is found at 1200 to 1241 (DINECSLSDNLCRNGKCVNMIGTYQCSCNPGYQATPDRQGCT). Residue threonine 1222 is glycosylated (O-linked (Glc) threonine). One can recognise an EGF-like 19; calcium-binding domain in the interval 1242–1282 (DIDECMIMNGGCDTQCTNSEGSYECSCSEGYALMPDGRSCA). An O-linked (Glc) serine glycan is attached at serine 1263. The EGF-like 20; calcium-binding domain maps to 1283 to 1324 (DIDECENNPDICDGGQCTNIPGEYRCLCYDGFMASMDMKTCI). One can recognise an EGF-like 21; calcium-binding domain in the interval 1325 to 1366 (DVNECDLNSNICMFGECENTKGSFICHCQLGYSVKKGTTGCT). Serine 1347 is a glycosylation site (O-linked (Glc) serine). Residues 1367 to 1407 (DVDECEIGAHNCDMHASCLNIPGSFKCSCREGWIGNGIKCI) enclose the EGF-like 22; calcium-binding domain. A glycan (O-linked (Glc) serine) is linked at serine 1390. Residues 1408–1448 (DLDECSNGTHQCSINAQCVNTPGSYRCACSEGFTGDGFTCS) enclose the EGF-like 23; calcium-binding domain. Asparagine 1414 carries an N-linked (GlcNAc...) asparagine glycan. One can recognise an EGF-like 24; calcium-binding domain in the interval 1449–1490 (DVDECAENINLCENGQCLNVPGAYRCECEMGFTPASDSRSCQ). The EGF-like 25; calcium-binding domain occupies 1491-1531 (DIDECSFQNICVFGTCNNLPGMFHCICDDGYELDRTGGNCT). Asparagine 1529 is a glycosylation site (N-linked (GlcNAc...) asparagine). Residues 1532 to 1572 (DIDECADPINCVNGLCVNTPGRYECNCPPDFQLNPTGVGCV) enclose the EGF-like 26; calcium-binding domain. The TB 6 domain occupies 1577 to 1633 (GNCYLKFGPRGDGSLSCNTEIGVGVSRSSCCCSLGKAWGNPCETCPPVNSTEYYTLC). Asparagine 1625 carries an N-linked (GlcNAc...) asparagine glycan. One can recognise an EGF-like 27; calcium-binding domain in the interval 1650–1691 (DIDECQELPGLCQGGNCINTFGSFQCECPQGYYLSEDTRICE). Cystine bridges form between cysteine 1654–cysteine 1666, cysteine 1661–cysteine 1675, cysteine 1677–cysteine 1690, cysteine 1696–cysteine 1708, cysteine 1703–cysteine 1717, and cysteine 1719–cysteine 1732. An O-linked (Glc) serine glycan is attached at serine 1672. The EGF-like 28; calcium-binding domain maps to 1692 to 1733 (DIDECFAHPGVCGPGTCYNTLGNYTCICPPEYMQVNGGHNCM). A glycan (N-linked (GlcNAc...) asparagine) is linked at asparagine 1714. Positions 1735–2171 (MRKSFCYRSY…VPSLHDTRED (437 aa)) are interaction with MFAP4. The region spanning 1738–1791 (SFCYRSYNGTTCENELPFNVTKRMCCCTYNVGKAWNKPCEPCPTPGTADFKTIC) is the TB 7 domain. Asparagine 1745 and asparagine 1756 each carry an N-linked (GlcNAc...) asparagine glycan. An EGF-like 29; calcium-binding domain is found at 1808–1849 (DIDECKEIPGICANGVCINQIGSFRCECPTGFSYNDLLLVCE). Cystine bridges form between cysteine 1812–cysteine 1824, cysteine 1819–cysteine 1833, cysteine 1835–cysteine 1848, cysteine 1854–cysteine 1867, cysteine 1861–cysteine 1876, cysteine 1878–cysteine 1890, cysteine 1896–cysteine 1908, cysteine 1903–cysteine 1917, cysteine 1919–cysteine 1932, cysteine 1938–cysteine 1948, cysteine 1943–cysteine 1957, cysteine 1959–cysteine 1971, cysteine 1977–cysteine 1990, cysteine 1985–cysteine 1999, cysteine 2001–cysteine 2014, cysteine 2020–cysteine 2032, cysteine 2027–cysteine 2041, cysteine 2043–cysteine 2054, cysteine 2060–cysteine 2072, cysteine 2067–cysteine 2081, and cysteine 2083–cysteine 2096. The 42-residue stretch at 1850-1891 (DIDECSNGDNLCQRNADCINSPGSYRCECAAGFKLSPNGACV) folds into the EGF-like 30; calcium-binding domain. Serine 1873 is a glycosylation site (O-linked (Glc) serine). Residues 1892–1933 (DRNECLEIPNVCSHGLCVDLQGSYQCICHNGFKASQDQTMCM) form the EGF-like 31; calcium-binding domain. The 39-residue stretch at 1934–1972 (DVDECERHPCGNGTCKNTVGSYNCLCYPGFELTHNNDCL) folds into the EGF-like 32; calcium-binding domain. Asparagine 1945 is a glycosylation site (N-linked (GlcNAc...) asparagine). The O-linked (Glc) serine glycan is linked to serine 1954. The EGF-like 33; calcium-binding domain maps to 1973-2015 (DIDECSSFFGQVCRNGRCFNEIGSFKCLCNEGYELTPDGKNCI). Serine 1996 carries O-linked (Glc) serine glycosylation. The 40-residue stretch at 2016 to 2055 (DTNECVALPGSCSPGTCQNLEGSFRCICPPGYEVKSENCI) folds into the EGF-like 34; calcium-binding domain. The 42-residue stretch at 2056-2097 (DINECDEDPNICLFGSCTNTPGGFQCLCPPGFVLSDNGRRCF) folds into the EGF-like 35; calcium-binding domain. In terms of domain architecture, TB 8 spans 2102–2155 (SFCFTNFENGKCSVPKAFNTTKAKCCCSKMPGEGWGDPCELCPKDDEVAFQDLC). N-linked (GlcNAc...) asparagine glycosylation occurs at asparagine 2120. In terms of domain architecture, EGF-like 36; calcium-binding spans 2171–2212 (DVNECLESPGICSNGQCINTDGSFRCECPMGYNLDYTGVRCV). 15 cysteine pairs are disulfide-bonded: cysteine 2175–cysteine 2187, cysteine 2182–cysteine 2196, cysteine 2198–cysteine 2211, cysteine 2217–cysteine 2228, cysteine 2223–cysteine 2237, cysteine 2239–cysteine 2251, cysteine 2257–cysteine 2268, cysteine 2264–cysteine 2277, cysteine 2279–cysteine 2292, cysteine 2298–cysteine 2312, cysteine 2305–cysteine 2321, cysteine 2323–cysteine 2336, cysteine 2342–cysteine 2354, cysteine 2349–cysteine 2363, and cysteine 2365–cysteine 2378. A glycan (O-linked (Glc) serine) is linked at serine 2193. One can recognise an EGF-like 37; calcium-binding domain in the interval 2213 to 2252 (DTDECSIGNPCGNGTCTNVIGSFECNCNEGFEPGPMMNCE). A glycan (N-linked (GlcNAc...) asparagine) is linked at asparagine 2225. Residues 2253 to 2293 (DINECAQNPLLCAFRCMNTFGSYECTCPIGYALREDQKMCK) form the EGF-like 38; calcium-binding domain. A glycan (O-linked (Glc) serine) is linked at serine 2274. The region spanning 2294 to 2337 (DLDECAEGLHDCESRGMMCKNLIGTFMCICPPGMARRPDGEGCV) is the EGF-like 39; calcium-binding domain. The 42-residue stretch at 2338–2379 (DENECRTKPGICENGRCVNIIGSYRCECNEGFQSSSSGTECL) folds into the EGF-like 40; calcium-binding domain. The O-linked (Glc) serine glycan is linked to serine 2360. The TB 9 domain occupies 2384–2437 (GLCFAEVLQTICQMASSSRNLVTKSECCCDGGRGWGHQCELCPLPGTAQYKKIC). The region spanning 2449 to 2490 (DIDECKVMPNLCTNGQCINTMGSFRCFCKVGYTTDISGTSCI) is the EGF-like 41; calcium-binding domain. 21 disulfides stabilise this stretch: cysteine 2453–cysteine 2465, cysteine 2460–cysteine 2474, cysteine 2476–cysteine 2489, cysteine 2495–cysteine 2506, cysteine 2502–cysteine 2515, cysteine 2517–cysteine 2530, cysteine 2536–cysteine 2547, cysteine 2543–cysteine 2556, cysteine 2558–cysteine 2569, cysteine 2575–cysteine 2588, cysteine 2582–cysteine 2597, cysteine 2599–cysteine 2612, cysteine 2618–cysteine 2628, cysteine 2624–cysteine 2637, cysteine 2639–cysteine 2652, cysteine 2658–cysteine 2669, cysteine 2664–cysteine 2678, cysteine 2680–cysteine 2693, cysteine 2699–cysteine 2710, cysteine 2706–cysteine 2719, and cysteine 2721–cysteine 2733. Serine 2471 is a glycosylation site (O-linked (Glc) serine). The EGF-like 42; calcium-binding domain occupies 2491–2531 (DLDECSQSPKPCNYICKNTEGSYQCSCPRGYVLQEDGKTCK). Serine 2512 is a glycosylation site (O-linked (Glc) serine). The 39-residue stretch at 2532 to 2570 (DLDECQTKQHNCQFLCVNTLGGFTCKCPPGFTQHHTACI) folds into the EGF-like 43; calcium-binding domain. The 43-residue stretch at 2571 to 2613 (DNNECGSQPSLCGAKGICQNTPGSFSCECQRGFSLDATGLNCE) folds into the EGF-like 44; calcium-binding domain. O-linked (Glc) serine glycosylation occurs at serine 2594. In terms of domain architecture, EGF-like 45; calcium-binding spans 2614–2653 (DVDECDGNHRCQHGCQNILGGYRCGCPQGYIQHYQWNQCV). The region spanning 2654 to 2694 (DENECSNPNACGSASCYNTLGSYKCACPSGFSFDQFSSACH) is the EGF-like 46; calcium-binding domain. Serine 2675 carries an O-linked (Glc) serine glycan. The 40-residue stretch at 2695 to 2734 (DVNECSSSKNPCNYGCSNTEGGYLCGCPPGYYRVGQGHCV) folds into the EGF-like 47; calcium-binding domain. Residue asparagine 2808 is glycosylated (N-linked (GlcNAc...) asparagine).

This sequence belongs to the fibrillin family. As to quaternary structure, interacts with BMP2, BMP4, BMP7, BMP10 and GDF5. Interacts with MFAP2 and MFAP5. Interacts with ADAMTSL5. Interacts with MFAP4. N-glycosylated. Post-translationally, O-glycosylated on serine residues by POGLUT2 and POGLUT3. As to expression, almost exclusively expressed in placenta. Expressed at much lower level in other tissues. Expressed in fetal eye (18 weeks)in the retinal pigment epithelium (RPE), the choroid, Bruch's membrane and in the sclera. Not expressed in the neural retina. In terms of tissue distribution, present at high level in cytotrophoblasts as compared with syncytiotrophoblasts at 8-9 weeks of pregnancy (at protein level). Levels in the serum increase during pregnancy (at protein level).

The protein localises to the secreted. The protein resides in the extracellular space. It localises to the extracellular matrix. In terms of biological role, fibrillins are structural components of 10-12 nm extracellular calcium-binding microfibrils, which occur either in association with elastin or in elastin-free bundles. Fibrillin-2-containing microfibrils regulate the early process of elastic fiber assembly. Regulates osteoblast maturation by controlling TGF-beta bioavailability and calibrating TGF-beta and BMP levels, respectively. Hormone secreted by trophoblasts that promotes trophoblast invasiveness. Has glucogenic activity: is able to increase plasma glucose levels. This Homo sapiens (Human) protein is Fibrillin-2.